Here is a 331-residue protein sequence, read N- to C-terminus: UPF0324 membrane protein SERP0111 (331 aa).

10 helical membrane-spanning segments follow: residues 7–26, 31–48, 69–88, 93–115, 122–144, 154–176, 183–205, 249–271, 275–297, and 308–330; these read ASFMKGIMFTFTIAIISYIL, ILHTIGALAIAIIFAMIY, LLKFAIILYGLKLNMGDILG, LLLIDIIVIIFSISLTLLLNQII, SILLGIGTGVCGAAAIAATAPIL, SVGIIALVGTIFALIYTAIEAIF, YGAWTGISLHEIAQVVLAAGIGG, IPYFLIGFIIMACINTFVPIPSL, IINVITTLCMLMAMVALGLNIVL, and FIVICITSICLSGVTLLVTSIMF.

This sequence belongs to the UPF0324 family.

The protein resides in the cell membrane. In Staphylococcus epidermidis (strain ATCC 35984 / DSM 28319 / BCRC 17069 / CCUG 31568 / BM 3577 / RP62A), this protein is UPF0324 membrane protein SERP0111.